The chain runs to 227 residues: UPF0173 metal-dependent hydrolase DR_0006 (227 aa).

This sequence belongs to the UPF0173 family.

The sequence is that of UPF0173 metal-dependent hydrolase DR_0006 from Deinococcus radiodurans (strain ATCC 13939 / DSM 20539 / JCM 16871 / CCUG 27074 / LMG 4051 / NBRC 15346 / NCIMB 9279 / VKM B-1422 / R1).